Reading from the N-terminus, the 380-residue chain is Glutamate 5-kinase (380 aa).

Residue lysine 20 participates in ATP binding. Substrate contacts are provided by serine 59, aspartate 146, and asparagine 158. 220-226 (TGGMYSK) contacts ATP. Residues 285–363 (SGTVTVDEGA…HEVAAILGDA (79 aa)) form the PUA domain.

This sequence belongs to the glutamate 5-kinase family.

The protein resides in the cytoplasm. It catalyses the reaction L-glutamate + ATP = L-glutamyl 5-phosphate + ADP. It functions in the pathway amino-acid biosynthesis; L-proline biosynthesis; L-glutamate 5-semialdehyde from L-glutamate: step 1/2. Catalyzes the transfer of a phosphate group to glutamate to form L-glutamate 5-phosphate. This is Glutamate 5-kinase from Nitratidesulfovibrio vulgaris (strain ATCC 29579 / DSM 644 / CCUG 34227 / NCIMB 8303 / VKM B-1760 / Hildenborough) (Desulfovibrio vulgaris).